The primary structure comprises 476 residues: Serine/threonine-protein kinase Chk1 (476 aa).

The Protein kinase domain maps to 9–265; it reads WDLVQTLGEG…IPDIKKDRWY (257 aa). Residues 15 to 23 and Lys-38 each bind ATP; that span reads LGEGAYGEV. The Proton acceptor role is filled by Asp-130. The interval 272–329 is disordered; sequence GTKRGRVSSGGVTESPGALPKHIRSDTDFSPVKSALGEDKASYSTSQPEPGTGGALWD. Residue Ser-280 is modified to Phosphoserine; by PKB/AKT1. Phosphoserine is present on Ser-296. At Ser-317 the chain carries Phosphoserine; by ATM and ATR. A Phosphoserine modification is found at Ser-345. The interval 391 to 476 is autoinhibitory region; that stretch reads RSLRDVCEKM…STQKVWLPPP (86 aa).

Belongs to the protein kinase superfamily. CAMK Ser/Thr protein kinase family. NIM1 subfamily. Phosphorylated by ATR in a RAD17-dependent manner in response to ultraviolet irradiation and inhibition of DNA replication. Phosphorylated by ATM in response to ionizing irradiation. Phosphorylation at Ser-345 induces a change in the conformation of the protein and activates the kinase activity. Phosphorylation at Ser-345 also increases binding to 14-3-3 proteins and promotes nuclear retention.

It is found in the nucleus. The protein localises to the chromosome. The protein resides in the cytoplasm. Its subcellular location is the cytoskeleton. It localises to the microtubule organizing center. It is found in the centrosome. It catalyses the reaction L-seryl-[protein] + ATP = O-phospho-L-seryl-[protein] + ADP + H(+). It carries out the reaction L-threonyl-[protein] + ATP = O-phospho-L-threonyl-[protein] + ADP + H(+). Activated through phosphorylation by atr or atm in response to DNA damage or inhibition of DNA replication. Its function is as follows. Serine/threonine-protein kinase which is required for checkpoint-mediated cell cycle arrest and activation of DNA repair in response to the presence of DNA damage or unreplicated DNA. May also negatively regulate cell cycle progression during unperturbed cell cycles. This regulation is achieved by a number of mechanisms that together help to preserve the integrity of the genome. Recognizes the substrate consensus sequence [R-X-X-S/T]. Binds to and phosphorylates CDC25A, CDC25B and CDC25C. This inhibits their activity through proteasomal degradation, nucleo-cytoplasmic shuttling and inhibition by proteins of the 13-3-3 family. Inhibition of CDC25 leads to increased inhibitory tyrosine phosphorylation of CDK-cyclin complexes and blocks cell cycle progression. May promote DNA repair, regulate chromatin assembly and the transcription of genes that regulate cell-cycle progression. May also play a role in replication fork maintenance. The sequence is that of Serine/threonine-protein kinase Chk1 (CHEK1) from Gallus gallus (Chicken).